The following is an 837-amino-acid chain: Outer membrane usher protein HifC (837 aa).

An N-terminal signal peptide occupies residues 1 to 26 (MKTKNFPLNKIAFACTLLLANPVAWA). A disulfide bond links Cys-813 and Cys-833.

It belongs to the fimbrial export usher family.

Its subcellular location is the cell outer membrane. Functionally, essential for piliation. The polypeptide is Outer membrane usher protein HifC (hifC) (Haemophilus influenzae).